The primary structure comprises 196 residues: Gastrula zinc finger protein XlCGF64.1 (196 aa).

7 C2H2-type zinc fingers span residues Tyr6 to His28, Phe34 to His56, Tyr62 to His84, Phe90 to His112, Tyr118 to His140, Phe146 to His168, and Leu174 to His196.

The protein belongs to the krueppel C2H2-type zinc-finger protein family.

It is found in the nucleus. In terms of biological role, may be involved in transcriptional regulation. The polypeptide is Gastrula zinc finger protein XlCGF64.1 (Xenopus laevis (African clawed frog)).